A 189-amino-acid polypeptide reads, in one-letter code: Elongation factor P (189 aa).

It belongs to the elongation factor P family.

Its subcellular location is the cytoplasm. It participates in protein biosynthesis; polypeptide chain elongation. Involved in peptide bond synthesis. Stimulates efficient translation and peptide-bond synthesis on native or reconstituted 70S ribosomes in vitro. Probably functions indirectly by altering the affinity of the ribosome for aminoacyl-tRNA, thus increasing their reactivity as acceptors for peptidyl transferase. The polypeptide is Elongation factor P (Ehrlichia chaffeensis (strain ATCC CRL-10679 / Arkansas)).